The primary structure comprises 121 residues: Probable V-type proton ATPase subunit F (121 aa).

This sequence belongs to the V-ATPase F subunit family. As to quaternary structure, V-ATPase is a heteromultimeric enzyme made up of two complexes: the ATP-hydrolytic V1 complex and the proton translocation V0 complex. The V1 complex consists of three catalytic AB heterodimers that form a heterohexamer, three peripheral stalks each consisting of EG heterodimers, one central rotor including subunits D and F, and the regulatory subunits C and H. The proton translocation complex V0 consists of the proton transport subunit a, a ring of proteolipid subunits c9c'', rotary subunit d, subunits e and f, and the accessory subunits vah-19/Ac45 and vah-20/PRR.

In terms of biological role, subunit of the V1 complex of vacuolar(H+)-ATPase (V-ATPase), a multisubunit enzyme composed of a peripheral complex (V1) that hydrolyzes ATP and a membrane integral complex (V0) that translocates protons. V-ATPase is responsible for acidifying and maintaining the pH of intracellular compartments and in some cell types, is targeted to the plasma membrane, where it is responsible for acidifying the extracellular environment. Required along with other vacuolar ATPase components for the removal of protein aggregates which form in immature oocytes in the distal gonad. This removal occurs as the oocytes mature and move to the proximal gonad, is triggered by the introduction of sperm through mating and occurs before fertilization. The introduction of sperm triggers V-ATPase accumulation in proximal oocytes and induces lysosomal acidification which leads to engulfing of protein aggregates by lysosomes and subsequent clearance of the aggregates. Lysosomal acidification also leads to changes in mitochondrial morphology and function. Mitochondria in distal immature oocytes are fragmented, produce high levels of reactive oxygen species (ROS) and have high membrane potential, indicative of metabolic inactivity. In contrast, mitochondria in proximal mature oocytes are tubular with lower ROS levels and membrane potential, indicative of an active metabolic state required for aggregate mobilization before clearance. In Caenorhabditis elegans, this protein is Probable V-type proton ATPase subunit F.